Here is a 174-residue protein sequence, read N- to C-terminus: Disulfide bond formation protein B (174 aa).

Residues 1–14 are Cytoplasmic-facing; that stretch reads MLNFLNICSKTRKS. A helical transmembrane segment spans residues 15–31; it reads WVLLIFTVVILELIALY. At 32–49 the chain is on the periplasmic side; that stretch reads LQHIVLIKPCVLCVYQRC. Cys41 and Cys44 are disulfide-bonded. Residues 50 to 65 traverse the membrane as a helical segment; the sequence is ALCGIGIAGLIGTIAP. At 66 to 71 the chain is on the cytoplasmic side; it reads FTPLRF. A helical membrane pass occupies residues 72–89; that stretch reads FSIPIWIYSAWKGLLLAK. Topologically, residues 90-144 are periplasmic; that stretch reads EYTDIQLHPSPFFMCDLFVQFPHWLPLNKWWPSMFDADGDCAEYKWYFLSLEISQ. Cysteines 104 and 130 form a disulfide. A helical membrane pass occupies residues 145–163; sequence WMLIIFANYLIIAILVSLS. Over 164 to 174 the chain is Cytoplasmic; sequence QIIDLKKWNNK.

Belongs to the DsbB family.

The protein resides in the cell inner membrane. In terms of biological role, required for disulfide bond formation in some periplasmic proteins. Acts by oxidizing the DsbA protein. The protein is Disulfide bond formation protein B of Blochmanniella pennsylvanica (strain BPEN).